A 298-amino-acid polypeptide reads, in one-letter code: Protein pxr1 (298 aa).

The span at 1 to 11 (MGLAAPRKRTK) shows a compositional bias: basic residues. Residues 1-23 (MGLAAPRKRTKISHDPNNTNWAR) are disordered. Positions 25 to 79 (TSGFGHKILSSQGWTPGSFLGARDAAHADMFTAASAGHIRVVVKDDTLGLGARAG) constitute a G-patch domain. The segment at 145–274 (LPERESVQQS…RPLGRQIVRG (130 aa)) is disordered. A compositionally biased stretch (polar residues) spans 151–164 (VQQSRAAVETSDSN). Residues 199-222 (REKKEKKDKKEKKEKKDKKDKKRK) are compositionally biased toward basic residues. Residues 247-256 (GLESDSTSVS) are compositionally biased toward polar residues.

Belongs to the PINX1 family.

The protein localises to the nucleus. It localises to the nucleolus. Involved in rRNA-processing at A0, A1 and A2 sites and negatively regulates telomerase. In Aspergillus terreus (strain NIH 2624 / FGSC A1156), this protein is Protein pxr1 (pxr1).